The chain runs to 549 residues: Tigger transposable element-derived protein 7 (549 aa).

The 52-residue stretch at 1-52 (MNKRGKYTTLNLEEKMKVLSRIEAGRSLKSVMDEFGISKSTFYDIKKNKKLI) folds into the HTH psq-type domain. 2 DNA-binding regions (H-T-H motif) span residues 28 to 48 (LKSV…IKKN) and 101 to 132 (VELQ…FRNR). Residues 68 to 139 (KRKRTTGAKY…RNRHAIGNRK (72 aa)) form the HTH CENPB-type domain. The DDE-1 domain maps to 169–399 (LCLAQLYSGD…VKQITIANAW (231 aa)). Residues 527 to 549 (FLKPRPHNIKDSFSGPSTSGSNH) are disordered. Residues 540-549 (SGPSTSGSNH) are compositionally biased toward polar residues.

The protein belongs to the tigger transposable element derived protein family. Expressed in all tissues tested. Higher expression in testis and ovary.

Its subcellular location is the nucleus. The sequence is that of Tigger transposable element-derived protein 7 (TIGD7) from Homo sapiens (Human).